A 456-amino-acid chain; its full sequence is Putative gluconeogenesis factor (456 aa).

The protein belongs to the gluconeogenesis factor family.

It localises to the cytoplasm. Required for morphogenesis under gluconeogenic growth conditions. This chain is Putative gluconeogenesis factor, found in Nostoc sp. (strain PCC 7120 / SAG 25.82 / UTEX 2576).